Consider the following 98-residue polypeptide: NADH-ubiquinone oxidoreductase chain 4L (98 aa).

The next 3 helical transmembrane spans lie at 2 to 22 (SPIY…TLLF), 26 to 46 (LMST…MVTS), and 61 to 81 (ITML…LVMI).

This sequence belongs to the complex I subunit 4L family. Core subunit of respiratory chain NADH dehydrogenase (Complex I) which is composed of 45 different subunits.

The protein resides in the mitochondrion inner membrane. The catalysed reaction is a ubiquinone + NADH + 5 H(+)(in) = a ubiquinol + NAD(+) + 4 H(+)(out). Core subunit of the mitochondrial membrane respiratory chain NADH dehydrogenase (Complex I) which catalyzes electron transfer from NADH through the respiratory chain, using ubiquinone as an electron acceptor. Part of the enzyme membrane arm which is embedded in the lipid bilayer and involved in proton translocation. The chain is NADH-ubiquinone oxidoreductase chain 4L (MT-ND4L) from Nephelomys albigularis (Tomes's rice rat).